The chain runs to 355 residues: Protein-glutamate methylesterase/protein-glutamine glutaminase (355 aa).

Positions 4 to 121 (KVLIIDDSAL…ANGMHEYSEM (118 aa)) constitute a Response regulatory domain. Aspartate 55 carries the post-translational modification 4-aspartylphosphate. In terms of domain architecture, CheB-type methylesterase spans 156 to 348 (LISSEKLIII…GRVLQYLAAN (193 aa)). Active-site residues include serine 168, histidine 194, and aspartate 290.

It belongs to the CheB family. In terms of processing, phosphorylated by CheA. Phosphorylation of the N-terminal regulatory domain activates the methylesterase activity.

The protein localises to the cytoplasm. It catalyses the reaction [protein]-L-glutamate 5-O-methyl ester + H2O = L-glutamyl-[protein] + methanol + H(+). The enzyme catalyses L-glutaminyl-[protein] + H2O = L-glutamyl-[protein] + NH4(+). In terms of biological role, involved in chemotaxis. Part of a chemotaxis signal transduction system that modulates chemotaxis in response to various stimuli. Catalyzes the demethylation of specific methylglutamate residues introduced into the chemoreceptors (methyl-accepting chemotaxis proteins or MCP) by CheR. Also mediates the irreversible deamidation of specific glutamine residues to glutamic acid. This Methylobacillus flagellatus (strain ATCC 51484 / DSM 6875 / VKM B-1610 / KT) protein is Protein-glutamate methylesterase/protein-glutamine glutaminase.